The primary structure comprises 360 residues: A-type ATP synthase subunit C (360 aa).

A disordered region spans residues 1–25 (MRLLEKLWGQKPSRKSDKKKNGTSN).

This sequence belongs to the V-ATPase V0D/AC39 subunit family. As to quaternary structure, has multiple subunits with at least A(3), B(3), C, D, E, F, H, I and proteolipid K(x).

The protein localises to the cell membrane. Functionally, component of the A-type ATP synthase that produces ATP from ADP in the presence of a proton gradient across the membrane. This chain is A-type ATP synthase subunit C, found in Methanosarcina barkeri (strain Fusaro / DSM 804).